The following is a 275-amino-acid chain: Leucine-rich repeat-containing protein 3C (275 aa).

Positions 1-41 (MRMTSSSFVSYCTPGLCQFMAMLPTAGHLLPLLLVIGTGGT) are cleaved as a signal peptide. The LRRNT domain maps to 42 to 79 (VPSPQVPPRGCYVAKEAGERTFRCSQAGLSAVPSGIPN). LRR repeat units lie at residues 80 to 101 (DTRK…AFQH), 104 to 125 (VLEE…AFQG), and 129 to 150 (TLRH…AFVG). An N-linked (GlcNAc...) asparagine glycan is attached at N156. The LRRCT domain maps to 160–212 (NPWHCDCALQEVLRQVRLVPGTGTGIVCGSGARPDLVGQEFLLLAGEEELCGS). The helical transmembrane segment at 225-245 (LLVTMGGWLTLMVAYLVHYVW) threads the bilayer.

The protein belongs to the LRRC3 family.

The protein localises to the membrane. This chain is Leucine-rich repeat-containing protein 3C (LRRC3C), found in Homo sapiens (Human).